The sequence spans 618 residues: GMC oxidoreductase family protein Mala s 12 (618 aa).

The signal sequence occupies residues 1–23 (MKGIVSWAVVSAALVLSATESLA). Residues valine 129 and valine 280 each coordinate FAD. Histidine 556 acts as the Proton donor in catalysis. Histidine 599 acts as the Proton acceptor in catalysis.

It belongs to the GMC oxidoreductase family. Monomer. It depends on FAD as a cofactor.

It localises to the secreted. The polypeptide is GMC oxidoreductase family protein Mala s 12 (Malassezia sympodialis (strain ATCC 42132) (Atopic eczema-associated yeast)).